Consider the following 360-residue polypeptide: POU domain, class 5, transcription factor 1 (360 aa).

2 disordered regions span residues 1-51 (MAGH…GPGV) and 88-114 (GGLETSQPEGEAGVGVESNSDGASPEP). The 9aaTAD signature appears at 4–12 (HLTSDFAFS). Serine 111 is subject to Phosphoserine; by MAPK. A Glycyl lysine isopeptide (Lys-Gly) (interchain with G-Cter in SUMO) cross-link involves residue lysine 123. The POU-specific domain occupies 138–212 (DIKALQKELE…LLQKWVEEAD (75 aa)). Arginine 157 and glutamine 164 together coordinate DNA. DNA-binding regions lie at residues 180–186 (SQTTICR) and 193–196 (SFKN). The homeobox DNA-binding region spans 230–289 (RKRKRTSIENRVRGNLENLFLQCPKPTLQQISHIAQQLGLEKDVVRVWFCNRRQKGKRSS). Threonine 235 carries the post-translational modification Phosphothreonine. Residues serine 236, serine 289, serine 290, and serine 355 each carry the phosphoserine modification.

It belongs to the POU transcription factor family. Class-5 subfamily. Interacts with PKM. Interacts with WWP2. Interacts with UBE2I and ZSCAN10. Interacts with PCGF1. Interacts with ESRRB; recruits ESRRB near the POU5F1-SOX2 element in the NANOG proximal promoter; the interaction is DNA independent. Interacts with ZNF322. Interacts with MAPK8 and MAPK9; the interaction allows MAPK8 and MAPK9 to phosphorylate POU5F1 on Ser-355. Interacts (when phosphorylated on Ser-355) with FBXW8. Interacts with FBXW4. Interacts with SOX2 and SOX15; binds synergistically with either SOX2 or SOX15 to DNA. Interacts with DDX56. Sumoylation enhances the protein stability, DNA binding and transactivation activity. Sumoylation is required for enhanced YES1 expression. In terms of processing, ubiquitinated; undergoes 'Lys-63'-linked polyubiquitination by WWP2 leading to proteasomal degradation. Post-translationally, ERK1/2-mediated phosphorylation at Ser-111 promotes nuclear exclusion and proteasomal degradation. Phosphorylation at Thr-235 and Ser-236 decrease DNA-binding and alters ability to activate transcription.

The protein resides in the cytoplasm. Its subcellular location is the nucleus. In terms of biological role, transcription factor that binds to the octamer motif (5'-ATTTGCAT-3'). Forms a trimeric complex with SOX2 or SOX15 on DNA and controls the expression of a number of genes involved in embryonic development such as YES1, FGF4, UTF1 and ZFP206. Critical for early embryogenesis and for embryonic stem cell pluripotency. The polypeptide is POU domain, class 5, transcription factor 1 (POU5F1) (Pan troglodytes (Chimpanzee)).